A 290-amino-acid chain; its full sequence is MLRKYEAMFILDQDTQDVNALSSRMIEIISKDGKVIEKNDLGLIEFAYKINHKKKGHYFVVIVEATAEAIKEFERIANIEKNVVRTLIINTENEQGYEQSVQLSKTDMTKFEEERKAKRDFKKPFVKKEFNKPTEKRTFEKPAEVTVEVKEVVVEEVKQTVKPAKKVAEAKVEEVSHEEAHDFVSKMEAKYKAHLAETVEEHVEEVEVEEAKTTAKKPAAPKMSAAERAKVDGSHNIDEERYELQKYSNKLRSVAIEKNLPKKLQEVNLRDLTKKELIEYMRKVRAALAK.

Residues Val-208–Gly-233 form a disordered region.

This sequence belongs to the bacterial ribosomal protein bS6 family.

In terms of biological role, binds together with bS18 to 16S ribosomal RNA. The polypeptide is Small ribosomal subunit protein bS6 (Mesoplasma florum (strain ATCC 33453 / NBRC 100688 / NCTC 11704 / L1) (Acholeplasma florum)).